A 737-amino-acid polypeptide reads, in one-letter code: Protein bicaudal D homolog (737 aa).

Coiled-coil stretches lie at residues 1–255 (MAES…RNAE), 292–319 (GSSDVKVRELEAAKEGLQEELKSREKIF), and 547–684 (AENE…DRDR). The segment at 72–97 (YRSQHQRSTRSELENEESLLEESSAK) is disordered. A disordered region spans residues 686–737 (VFKRSSTRAPTRETYQPPRAVRYPGSTTTAQQPAPSSSGGSRGGPRRGDNQQ). Residues 710-719 (GSTTTAQQPA) show a composition bias toward polar residues.

Belongs to the BicD family. Component of a dynein-regulating complex composed of at least bicd-1, dlc-1 and egal-1. Interacts with egal-1 and unc-83. In terms of tissue distribution, expressed in the excretory cell, body wall muscles, vulval muscle cells, PVD and FLP sensory neurons and AVF interneurons.

Its subcellular location is the nucleus envelope. The protein resides in the perikaryon. It localises to the cell projection. It is found in the dendrite. Part of a complex with dlc-1 and egal-1, which is recruited to the nuclear envelope by unc-83, where in turn, it recruits dynein to the nuclear surface and regulates nuclear migration in hypodermal precursor cells. Required for the formation of dendritic branches of PVD sensory neurons. In Caenorhabditis elegans, this protein is Protein bicaudal D homolog.